We begin with the raw amino-acid sequence, 180 residues long: Translation initiation factor IF-3 (180 aa).

The protein belongs to the IF-3 family. In terms of assembly, monomer.

Its subcellular location is the cytoplasm. In terms of biological role, IF-3 binds to the 30S ribosomal subunit and shifts the equilibrium between 70S ribosomes and their 50S and 30S subunits in favor of the free subunits, thus enhancing the availability of 30S subunits on which protein synthesis initiation begins. The polypeptide is Translation initiation factor IF-3 (Pasteurella multocida (strain Pm70)).